The chain runs to 159 residues: Succinate dehydrogenase [ubiquinone] cytochrome b small subunit, mitochondrial (159 aa).

The N-terminal 56 residues, 1–56, are a transit peptide targeting the mitochondrion; the sequence is MAVLLKLGVLCSGQGARALLLRSRVVRPAYVSAFLQDQPTQGRCGTQHIHLSPSHH. Residues 57-63 are Mitochondrial matrix-facing; sequence SGSKAAS. A helical transmembrane segment spans residues 64 to 85; the sequence is LHWTSERVVSVLLLGLIPAGYL. The Mitochondrial intermembrane portion of the chain corresponds to 86–90; it reads NPCSV. A helical transmembrane segment spans residues 91–111; sequence VDYSLAAALTLHSHWGLGQVV. H102 lines the heme b pocket. Topologically, residues 112-120 are mitochondrial matrix; the sequence is TDYVHGDTL. Y114 is an a ubiquinone binding site. Residues 121–142 traverse the membrane as a helical segment; it reads PKAARAGLLALSALTFAGLCYF. Over 143–159 the chain is Mitochondrial intermembrane; sequence NYHDVGICRAVAMLWKL.

The protein belongs to the CybS family. As to quaternary structure, component of complex II composed of four subunits: the flavoprotein (FP) SDHA, iron-sulfur protein (IP) SDHB, and a cytochrome b560 composed of SDHC and SDHD.

It localises to the mitochondrion inner membrane. It participates in carbohydrate metabolism; tricarboxylic acid cycle. Its function is as follows. Membrane-anchoring subunit of succinate dehydrogenase (SDH) that is involved in complex II of the mitochondrial electron transport chain and is responsible for transferring electrons from succinate to ubiquinone (coenzyme Q). SDH also oxidizes malate to the non-canonical enol form of oxaloacetate, enol-oxaloacetate. Enol-oxaloacetate, which is a potent inhibitor of the succinate dehydrogenase activity, is further isomerized into keto-oxaloacetate. This chain is Succinate dehydrogenase [ubiquinone] cytochrome b small subunit, mitochondrial (Sdhd), found in Mus musculus (Mouse).